The chain runs to 379 residues: Glucose-insensitive transcription protein 7 (379 aa).

The region spanning 181–272 (SNRIRYDWSQ…VSEIKWEALV (92 aa)) is the CS domain. The 88-residue stretch at 292–379 (ASGNTKNKAK…PPQGMEPKKF (88 aa)) folds into the SGS domain. Residues 345 to 379 (SYTESNGTALSTNWKDVKSKTFETKPPQGMEPKKF) form a disordered region. A compositionally biased stretch (polar residues) spans 346-358 (YTESNGTALSTNW).

Its function is as follows. Involved in cyclic AMP (cAMP) pathway, possibly by participating in the assembly or the conformational activation of specific multiprotein complexes. This is Glucose-insensitive transcription protein 7 (git7) from Schizosaccharomyces pombe (strain 972 / ATCC 24843) (Fission yeast).